The following is a 210-amino-acid chain: N-(5'-phosphoribosyl)anthranilate isomerase (210 aa).

The protein belongs to the TrpF family.

It catalyses the reaction N-(5-phospho-beta-D-ribosyl)anthranilate = 1-(2-carboxyphenylamino)-1-deoxy-D-ribulose 5-phosphate. Its pathway is amino-acid biosynthesis; L-tryptophan biosynthesis; L-tryptophan from chorismate: step 3/5. In Pseudomonas fluorescens (strain SBW25), this protein is N-(5'-phosphoribosyl)anthranilate isomerase.